Reading from the N-terminus, the 278-residue chain is HTH-type transcriptional regulator HdfR (278 aa).

One can recognise an HTH lysR-type domain in the interval 1-58; that stretch reads MDTELLKTFLEVSRTRHFGRAAEALYLTQSAVSFRIRQLENQLGVNLFTRHRNNIRLT. A DNA-binding region (H-T-H motif) is located at residues 18 to 37; it reads FGRAAEALYLTQSAVSFRIR.

Belongs to the LysR transcriptional regulatory family.

Its function is as follows. Negatively regulates the transcription of the flagellar master operon flhDC by binding to the upstream region of the operon. This chain is HTH-type transcriptional regulator HdfR, found in Salmonella schwarzengrund (strain CVM19633).